The following is a 130-amino-acid chain: Small ribosomal subunit protein uS8 (130 aa).

This sequence belongs to the universal ribosomal protein uS8 family. In terms of assembly, part of the 30S ribosomal subunit. Contacts proteins S5 and S12.

In terms of biological role, one of the primary rRNA binding proteins, it binds directly to 16S rRNA central domain where it helps coordinate assembly of the platform of the 30S subunit. The polypeptide is Small ribosomal subunit protein uS8 (Pectobacterium atrosepticum (strain SCRI 1043 / ATCC BAA-672) (Erwinia carotovora subsp. atroseptica)).